The chain runs to 118 residues: Non-specific lipid-transfer protein 5 (118 aa).

The signal sequence occupies residues 1-25; that stretch reads MEGLLKLSTLVIVCMLVTAPMASEA. 4 disulfides stabilise this stretch: C29/C76, C39/C53, C54/C100, and C74/C114.

Belongs to the plant LTP family.

In terms of biological role, plant non-specific lipid-transfer proteins transfer phospholipids as well as galactolipids across membranes. May play a role in wax or cutin deposition in the cell walls of expanding epidermal cells and certain secretory tissues. The sequence is that of Non-specific lipid-transfer protein 5 (LTP5) from Arabidopsis thaliana (Mouse-ear cress).